A 483-amino-acid polypeptide reads, in one-letter code: Protein disulfide-isomerase 5-3 (483 aa).

Residues Asn53, Asn74, and Asn99 are each glycosylated (N-linked (GlcNAc...) asparagine). Positions 133-263 constitute a Thioredoxin domain; the sequence is EETKEEFPDG…IVKMVEGLVA (131 aa). Cys170 serves as the catalytic Nucleophile. 3 N-linked (GlcNAc...) asparagine glycosylation sites follow: Asn279, Asn326, and Asn376. A helical transmembrane segment spans residues 442-462; sequence FSHFITNLCAIIGGVFTVAGI.

This sequence belongs to the protein disulfide isomerase family. Widely expressed.

It localises to the membrane. Acts as a protein-folding catalyst that interacts with nascent polypeptides to catalyze the formation, isomerization, and reduction or oxidation of disulfide bonds. The protein is Protein disulfide-isomerase 5-3 (PDIL5-3) of Arabidopsis thaliana (Mouse-ear cress).